Here is a 192-residue protein sequence, read N- to C-terminus: Fe/S biogenesis protein NfuA (192 aa).

Cysteine 149 and cysteine 152 together coordinate [4Fe-4S] cluster.

It belongs to the NfuA family. As to quaternary structure, homodimer. It depends on [4Fe-4S] cluster as a cofactor.

Its function is as follows. Involved in iron-sulfur cluster biogenesis. Binds a 4Fe-4S cluster, can transfer this cluster to apoproteins, and thereby intervenes in the maturation of Fe/S proteins. Could also act as a scaffold/chaperone for damaged Fe/S proteins. This Shewanella denitrificans (strain OS217 / ATCC BAA-1090 / DSM 15013) protein is Fe/S biogenesis protein NfuA.